The following is a 29-amino-acid chain: Omega-conotoxin MVIIC (29 aa).

Residues 1-2 (TR) constitute a propeptide that is removed on maturation. Disulfide bonds link C3-C18, C10-C22, and C17-C28. Cysteine amide is present on C28.

The protein belongs to the conotoxin O1 superfamily. In terms of processing, not hydroxylated; hydroxylation, on a synthetic hydroxylated MVIIC, has a significant impact on the oxidative folding but not on the biological activity. In terms of tissue distribution, expressed by the venom duct.

The protein resides in the secreted. Omega-conotoxins act at presynaptic membranes, they bind and block voltage-gated calcium channels (Cav). This toxin preferentially blocks P/Q-type calcium channels (Cav2.1/CACNA1A) (IC(50)=0.60 nM). Also shows an inhibition on Cav2.2/CACNA1A channels (IC(50)=7.0 nM). In Conus magus (Magical cone), this protein is Omega-conotoxin MVIIC.